We begin with the raw amino-acid sequence, 521 residues long: Protein DETOXIFICATION 44, chloroplastic (521 aa).

A chloroplast-targeting transit peptide spans 1–31 (MAAVATSFCFSPHRSPSRFGNPNSSIRRTIV). The interval 12-73 (PHRSPSRFGN…DHDHKPDPGI (62 aa)) is disordered. 2 stretches are compositionally biased toward polar residues: residues 18-27 (RFGNPNSSIR) and 42-61 (AVST…TSQN). 12 consecutive transmembrane segments (helical) span residues 80–100 (IMSI…TSLV), 103–123 (AFVG…VSVF), 167–187 (VSTS…ALSL), 213–235 (RLRA…FRGF), 242–262 (LYAV…LIFV), 268–288 (SGAA…LLWK), 314–334 (LLIG…SLAA), 345–365 (QIVL…AIAA), 385–405 (LFGV…VLFI), 423–443 (IALS…LAFV), 454–474 (FGFA…FMLV), and 481–503 (LAGI…AWRL).

Belongs to the multi antimicrobial extrusion (MATE) (TC 2.A.66.1) family. As to expression, expressed in shoots.

The protein resides in the plastid. The protein localises to the chloroplast membrane. The protein is Protein DETOXIFICATION 44, chloroplastic of Arabidopsis thaliana (Mouse-ear cress).